A 291-amino-acid chain; its full sequence is uncharacterized protein (291 aa).

The segment at 1–82 is disordered; it reads MEAEKETEQE…SYSSSPFETH (82 aa). Low complexity-rich tracts occupy residues 28 to 43 and 59 to 78; these read HSHS…ISAS and STSS…SSSP.

This is an uncharacterized protein from Arabidopsis thaliana (Mouse-ear cress).